The chain runs to 429 residues: Ribosomal RNA small subunit methyltransferase B (429 aa).

S-adenosyl-L-methionine-binding positions include 254-260, Asp277, Asp303, and Asp322; that span reads CAAPGGK. Cys375 serves as the catalytic Nucleophile.

Belongs to the class I-like SAM-binding methyltransferase superfamily. RsmB/NOP family.

It is found in the cytoplasm. It catalyses the reaction cytidine(967) in 16S rRNA + S-adenosyl-L-methionine = 5-methylcytidine(967) in 16S rRNA + S-adenosyl-L-homocysteine + H(+). In terms of biological role, specifically methylates the cytosine at position 967 (m5C967) of 16S rRNA. This chain is Ribosomal RNA small subunit methyltransferase B, found in Shigella sonnei (strain Ss046).